The following is a 481-amino-acid chain: Probable autolysin LytO (481 aa).

Residues 7–148 (KNEFIEWLKT…AYDFPMWFIR (142 aa)) form the Peptidase C51 domain. Positions 155 to 165 (TAPRSVQSPTQ) are enriched in polar residues. Residues 155–177 (TAPRSVQSPTQAPKKETAKPQPK) are disordered. The N-acetylmuramoyl-L-alanine amidase domain maps to 198 to 323 (SNPKGIVIHN…NEFTSTSCPH (126 aa)). The region spanning 398-466 (EESARFTNGN…YLPIRTWNGS (69 aa)) is the SH3b domain.

It belongs to the N-acetylmuramoyl-L-alanine amidase 2 family.

The catalysed reaction is Hydrolyzes the link between N-acetylmuramoyl residues and L-amino acid residues in certain cell-wall glycopeptides.. Has weak lytic activity toward S.aureus cells. The chain is Probable autolysin LytO from Staphylococcus aureus (strain NCTC 8325 / PS 47).